The sequence spans 398 residues: Sphingosine 1-phosphate receptor 5 (398 aa).

The Extracellular segment spans residues 1-40; it reads MESGLLRPAPVSEVIVLHYNYTGKLRGARYQPGAGLRADA. An N-linked (GlcNAc...) asparagine glycan is attached at asparagine 20. Residues 41–61 form a helical membrane-spanning segment; sequence VVCLAVCAFIVLENLAVLLVL. Residues 62–70 are Cytoplasmic-facing; it reads GRHPRFHAP. The chain crosses the membrane as a helical span at residues 71–91; it reads MFLLLGSLTLSDLLAGAAYAA. Residues 92–111 are Extracellular-facing; the sequence is NILLSGPLTLKLSPALWFAR. A helical transmembrane segment spans residues 112 to 132; sequence EGGVFVALTASVLSLLAIALE. Residues 133–151 are Cytoplasmic-facing; that stretch reads RSLTMARRGPAPVSSRGRT. A helical transmembrane segment spans residues 152-172; sequence LAMAAAAWGVSLLLGLLPALG. Residues 173–192 lie on the Extracellular side of the membrane; sequence WNCLGRLDACSTVLPLYAKA. The helical transmembrane segment at 193–213 threads the bilayer; it reads YVLFCVLAFVGILAAICALYA. The Cytoplasmic portion of the chain corresponds to 214–252; it reads RIYCQVRANARRLPARPGTAGTTSTRARRKPRSLALLRT. Residues 253-273 traverse the membrane as a helical segment; it reads LSVVLLAFVACWGPLFLLLLL. Over 274–287 the chain is Extracellular; sequence DVACPARTCPVLLQ. A helical membrane pass occupies residues 288–308; it reads ADPFLGLAMANSLLNPIIYTL. At 309–398 the chain is on the cytoplasmic side; it reads TNRDLRHALL…RTLVSEPAAD (90 aa). Cysteine 323 carries the S-palmitoyl cysteine lipid modification. A disordered region spans residues 329–398; sequence GRDPSGSQQS…RTLVSEPAAD (70 aa). The span at 333–347 shows a compositional bias: low complexity; the sequence is SGSQQSASAAEASGG. A Phosphoserine modification is found at serine 381.

Belongs to the G-protein coupled receptor 1 family. Widely expressed in the brain, most prominently in the corpus callosum, which is predominantly white matter. Detected in spleen, peripheral blood leukocytes, placenta, lung, aorta and fetal spleen. Low-level signal detected in many tissue extracts. Overexpressed in leukemic large granular lymphocytes. Isoform 1 is predominantly expressed in peripheral tissues. Isoform 2 is expressed in brain, spleen and peripheral blood leukocytes.

It localises to the cell membrane. Functionally, receptor for the lysosphingolipid sphingosine 1-phosphate (S1P). S1P is a bioactive lysophospholipid that elicits diverse physiological effect on most types of cells and tissues. Is coupled to both the G(i/0)alpha and G(12) subclass of heteromeric G-proteins. May play a regulatory role in the transformation of radial glial cells into astrocytes and may affect proliferative activity of these cells. In Homo sapiens (Human), this protein is Sphingosine 1-phosphate receptor 5 (S1PR5).